A 376-amino-acid polypeptide reads, in one-letter code: UPF0754 membrane protein BH1148 (376 aa).

A run of 2 helical transmembrane segments spans residues 3-23 (LILF…SLAI) and 355-375 (YLGA…ILLI).

It belongs to the UPF0754 family.

Its subcellular location is the cell membrane. In Halalkalibacterium halodurans (strain ATCC BAA-125 / DSM 18197 / FERM 7344 / JCM 9153 / C-125) (Bacillus halodurans), this protein is UPF0754 membrane protein BH1148.